Consider the following 705-residue polypeptide: Elongation factor G (705 aa).

Residues 8-290 enclose the tr-type G domain; sequence HRYRNIGIMA…GVIHLLPSPA (283 aa). GTP contacts are provided by residues 17 to 24, 88 to 92, and 142 to 145; these read AHIDAGKT, DTPGH, and NKMD.

It belongs to the TRAFAC class translation factor GTPase superfamily. Classic translation factor GTPase family. EF-G/EF-2 subfamily.

The protein resides in the cytoplasm. Functionally, catalyzes the GTP-dependent ribosomal translocation step during translation elongation. During this step, the ribosome changes from the pre-translocational (PRE) to the post-translocational (POST) state as the newly formed A-site-bound peptidyl-tRNA and P-site-bound deacylated tRNA move to the P and E sites, respectively. Catalyzes the coordinated movement of the two tRNA molecules, the mRNA and conformational changes in the ribosome. The protein is Elongation factor G of Xylella fastidiosa (strain M23).